A 431-amino-acid polypeptide reads, in one-letter code: Protein EARLY STARVATION 1, chloroplastic (431 aa).

A chloroplast-targeting transit peptide spans 1–19 (MAACSRGLVARPFDLTARG). 2 disordered regions span residues 65–126 (GNKP…DTGI) and 403–431 (GVYP…SPLE). Residues 415-431 (PAPPSDDPPGMPPSPLE) are compositionally biased toward pro residues.

This sequence belongs to the ESV1 family.

It is found in the plastid. The protein resides in the chloroplast stroma. In terms of biological role, binds preferentially to highly ordered alpha-glucans, such as starch and crystalline maltodextrins. Involved in the organization of the starch granule matrix, thus influencing starch turnover by modulating the accessibility of starch polymers to modifying and degrading enzymes. Required for the control of starch degradation in leaves and starch distribution in nonphotosynthetic parts. Promotes gravitropic responses, negative in shoots but positive in roots, by facilitating starch granules (statoliths) formation in hypocotyls and roots columella. Facilitates tight packing of starch granules in grains. The polypeptide is Protein EARLY STARVATION 1, chloroplastic (Oryza sativa subsp. indica (Rice)).